The primary structure comprises 617 residues: Protein fem-1 homolog A (617 aa).

ANK repeat units lie at residues 2–32 (DISA…EERA), 40–70 (EGGT…NVAL), 82–111 (EGAP…PVNN), 115–144 (TNST…DLEV), 148–177 (HGHT…DVNR), 181–210 (KGNT…RMER), and 213–242 (YGMT…ASRE). 2 TPR repeats span residues 245 to 279 (IHAL…RWAG) and 339 to 372 (SYYI…QQSN). ANK repeat units lie at residues 482-524 (GGHT…DVDS) and 528-557 (DNNT…HFDA).

This sequence belongs to the fem-1 family. In terms of assembly, component of a CRL2 E3 ubiquitin-protein ligase complex, also named ECS (Elongin BC-CUL2/5-SOCS-box protein) complex.

The protein resides in the mitochondrion. The protein localises to the cytoplasm. It participates in protein modification; protein ubiquitination. Functionally, substrate-recognition component of a Cul2-RING (CRL2) E3 ubiquitin-protein ligase complex of the DesCEND (destruction via C-end degrons) pathway, which recognizes a C-degron located at the extreme C terminus of target proteins, leading to their ubiquitination and degradation. The C-degron recognized by the DesCEND pathway is usually a motif of less than ten residues and can be present in full-length proteins, truncated proteins or proteolytically cleaved forms. The CRL2(FEM1A) complex specifically recognizes proteins with an arginine at the C-terminus: recognizes and binds proteins ending with -Lys/Arg-Xaa-Arg and -Lys/Arg-Xaa-Xaa-Arg C-degrons, leading to their ubiquitination and degradation. The chain is Protein fem-1 homolog A from Danio rerio (Zebrafish).